A 430-amino-acid chain; its full sequence is Ribosomal protein uS12 methylthiotransferase RimO (430 aa).

The 118-residue stretch at 2–119 (ISVYSISLGC…WPEMIGRALG (118 aa)) folds into the MTTase N-terminal domain. Cys-11, Cys-46, Cys-81, Cys-145, Cys-149, and Cys-152 together coordinate [4Fe-4S] cluster. One can recognise a Radical SAM core domain in the interval 131-361 (STGPSYAYLK…MEVQAEISEE (231 aa)). A TRAM domain is found at 364–430 (EGFTGSDEDV…SRTYDLVALS (67 aa)).

The protein belongs to the methylthiotransferase family. RimO subfamily. It depends on [4Fe-4S] cluster as a cofactor.

The protein resides in the cytoplasm. It catalyses the reaction L-aspartate(89)-[ribosomal protein uS12]-hydrogen + (sulfur carrier)-SH + AH2 + 2 S-adenosyl-L-methionine = 3-methylsulfanyl-L-aspartate(89)-[ribosomal protein uS12]-hydrogen + (sulfur carrier)-H + 5'-deoxyadenosine + L-methionine + A + S-adenosyl-L-homocysteine + 2 H(+). Functionally, catalyzes the methylthiolation of an aspartic acid residue of ribosomal protein uS12. In Oleidesulfovibrio alaskensis (strain ATCC BAA-1058 / DSM 17464 / G20) (Desulfovibrio alaskensis), this protein is Ribosomal protein uS12 methylthiotransferase RimO.